The chain runs to 266 residues: Dihydropteroate synthase (266 aa).

The region spanning 12–260 (AAIMGILNVT…DVKANQEIVA (249 aa)) is the Pterin-binding domain. Asn19 serves as a coordination point for Mg(2+). Residues Thr59, Asp93, Asn112, Asp176, Lys212, and 248–250 (RVH) each bind (7,8-dihydropterin-6-yl)methyl diphosphate.

It belongs to the DHPS family. In terms of assembly, homodimer or homotrimer. Mg(2+) serves as cofactor.

It catalyses the reaction (7,8-dihydropterin-6-yl)methyl diphosphate + 4-aminobenzoate = 7,8-dihydropteroate + diphosphate. It participates in cofactor biosynthesis; tetrahydrofolate biosynthesis; 7,8-dihydrofolate from 2-amino-4-hydroxy-6-hydroxymethyl-7,8-dihydropteridine diphosphate and 4-aminobenzoate: step 1/2. Functionally, catalyzes the condensation of para-aminobenzoate (pABA) with 6-hydroxymethyl-7,8-dihydropterin diphosphate (DHPt-PP) to form 7,8-dihydropteroate (H2Pte), the immediate precursor of folate derivatives. The protein is Dihydropteroate synthase (folP) of Streptococcus pyogenes.